The primary structure comprises 908 residues: Autophagy-related protein 9 (908 aa).

The Cytoplasmic segment spans residues 1 to 216 (MADGVIARLM…SGMWCIVVER (216 aa)). Residues 64 to 162 (SRATVDGRIP…IDQELQPPLH (99 aa)) form a disordered region. Residues 217 to 237 (VLHLIKVAFVAFLLTFLSQCV) form a helical membrane-spanning segment. Residues 238–259 (DFKKIPSNQKLSQVLVPQCTRN) are Lumenal-facing. N-linked (GlcNAc...) asparagine glycosylation occurs at Asn-259. Residues 260 to 280 (MSGLWNIGLWLFAFYFMWKSI) traverse the membrane as a helical segment. Residues 281–433 (QYILDLRRLT…GILSAKLRSR (153 aa)) are Cytoplasmic-facing. Residues 434-454 (FIFAGVMILILSPFVAGYLII) lie within the membrane without spanning it. Residues 455-525 (VYFLEYYNEI…KTSMVAKTVS (71 aa)) lie on the Cytoplasmic side of the membrane. The chain crosses the membrane as a helical span at residues 526 to 546 (FIAGSIATVLALISVFDPEMF). Topologically, residues 547-555 (LGFEITHDR) are lumenal. A helical transmembrane segment spans residues 556-576 (TVLFYTAVFGAIWSVARGSVS). At 577 to 622 (EDNAVFDPEYALGNVVEYTHYQPEHWKDRWHSADVKAEFEELYKLK) the chain is on the cytoplasmic side. Residues 623 to 643 (LVIFIEEILSILTTPFVLFFS) lie within the membrane without spanning it. The Cytoplasmic segment spans residues 644 to 908 (LPKSADQIID…HLNRRLGGVR (265 aa)). Disordered regions lie at residues 751-779 (AASR…AVMA) and 809-878 (QFRG…DSVV). The span at 813–825 (GNQGDGHMMGGGS) shows a compositional bias: gly residues. Basic and acidic residues predominate over residues 839-852 (QTHDDESEDSRAGL).

Belongs to the ATG9 family. As to quaternary structure, homotrimer; forms a homotrimer with a central pore that forms a path between the two membrane leaflets. Phosphorylated by apg-1. Apg-1 phosphorylation is required for preautophagosome elongation.

The protein resides in the preautophagosomal structure membrane. The protein localises to the cytoplasmic vesicle membrane. Its subcellular location is the golgi apparatus membrane. It is found in the endoplasmic reticulum membrane. The enzyme catalyses a 1,2-diacyl-sn-glycero-3-phosphocholine(in) = a 1,2-diacyl-sn-glycero-3-phosphocholine(out). It carries out the reaction a 1,2-diacyl-sn-glycero-3-phospho-L-serine(in) = a 1,2-diacyl-sn-glycero-3-phospho-L-serine(out). The catalysed reaction is a 1,2-diacyl-sn-glycero-3-phosphoethanolamine(in) = a 1,2-diacyl-sn-glycero-3-phosphoethanolamine(out). It catalyses the reaction a 1,2-diacyl-sn-glycero-3-phospho-(1D-myo-inositol-3-phosphate)(in) = a 1,2-diacyl-sn-glycero-3-phospho-(1D-myo-inositol-3-phosphate)(out). Phospholipid scramblase involved in autophagy and cytoplasm to vacuole transport (Cvt) vesicle formation. Cycles between the preautophagosomal structure/phagophore assembly site (PAS) and the cytoplasmic vesicle pool and supplies membrane for the growing autophagosome. Lipid scramblase activity plays a key role in preautophagosomal structure/phagophore assembly by distributing the phospholipids that arrive through atg-2 from the cytoplasmic to the luminal leaflet of the bilayer, thereby driving autophagosomal membrane expansion. Required for mitophagy. Also involved in endoplasmic reticulum-specific autophagic process and is essential for the survival of cells subjected to severe ER stress. Different machineries are required for anterograde trafficking to the PAS during either the Cvt pathway or bulk autophagy and for retrograde trafficking. This is Autophagy-related protein 9 (apg-7) from Neurospora crassa (strain ATCC 24698 / 74-OR23-1A / CBS 708.71 / DSM 1257 / FGSC 987).